Here is a 344-residue protein sequence, read N- to C-terminus: Ubiquitin-associated domain-containing protein 2 (344 aa).

The N-terminal stretch at 1-35 is a signal peptide; that stretch reads MFTSTGSSGLYKAPLSKSLLLVPSALSLLLALLLP. The Extracellular portion of the chain corresponds to 36–91; the sequence is HCQKLFVYDLHAVKNDFQIWRLICGRIICLDLKDTFCSSLLIYNFRIFERRYGSRK. Residues 92–112 traverse the membrane as a helical segment; it reads FASFLLGSWVLSALFDFLLIE. At 113–125 the chain is on the cytoplasmic side; that stretch reads AMQYFFGITAASN. A helical membrane pass occupies residues 126–146; the sequence is LPSGFLAPVFALFVPFYCSIP. Over 147 to 163 the chain is Extracellular; that stretch reads RVQVAQILGPLSITNKT. Residue asparagine 161 is glycosylated (N-linked (GlcNAc...) asparagine). A helical membrane pass occupies residues 164 to 184; it reads LIYILGLQLFTSGSYIWIVAI. Residues 185-344 lie on the Cytoplasmic side of the membrane; the sequence is SGLMSGLCYD…NVATNFLLQH (160 aa). The region spanning 304-344 is the UBA domain; it reads EVSEEQVARLMEMGFSRGDALEALRASNNDLNVATNFLLQH.

As to quaternary structure, interacts with FAF2. Interacts with LMBR1L. Interacts with AMFR and VCP.

The protein localises to the endoplasmic reticulum membrane. Its function is as follows. Restricts trafficking of FAF2 from the endoplasmic reticulum to lipid droplets. In association with LMBR1L and E3 ubiquitin-protein ligase AMFR, negatively regulates the canonical Wnt signaling pathway in the lymphocytes by promoting the ubiquitin-mediated degradation of CTNNB1 and Wnt receptors FZD6 and LRP6. The chain is Ubiquitin-associated domain-containing protein 2 (UBAC2) from Homo sapiens (Human).